An 80-amino-acid chain; its full sequence is Conotoxin Ca11.3 (80 aa).

Residues 1 to 19 (MKLVLAIVVILMLLSLSTG) form the signal peptide. Residues 20–42 (AEMSDNHASRSATALRDRLLSPK) constitute a propeptide that is removed on maturation. 4 cysteine pairs are disulfide-bonded: Cys46–Cys60, Cys53–Cys65, Cys59–Cys72, and Cys64–Cys79.

The protein belongs to the conotoxin I3 superfamily. As to expression, expressed by the venom duct.

The protein localises to the secreted. This is Conotoxin Ca11.3 from Conus caracteristicus (Characteristic cone).